We begin with the raw amino-acid sequence, 513 residues long: Serine/threonine-protein kinase ppk8 (513 aa).

Residues 98–114 (LSSTLTSMSEESSSTES) are compositionally biased toward low complexity. The tract at residues 98–120 (LSSTLTSMSEESSSTESKFATLN) is disordered. A Protein kinase domain is found at 241–505 (GKLNNVIGEG…ISGARSTTWM (265 aa)). Residues 247-255 (IGEGASSFI) and Lys270 each bind ATP. The active-site Proton acceptor is Asp364.

This sequence belongs to the protein kinase superfamily. Ser/Thr protein kinase family.

It is found in the cytoplasm. Its subcellular location is the nucleus. It carries out the reaction L-seryl-[protein] + ATP = O-phospho-L-seryl-[protein] + ADP + H(+). The enzyme catalyses L-threonyl-[protein] + ATP = O-phospho-L-threonyl-[protein] + ADP + H(+). This is Serine/threonine-protein kinase ppk8 (ppk8) from Schizosaccharomyces pombe (strain 972 / ATCC 24843) (Fission yeast).